A 302-amino-acid chain; its full sequence is Dehydrodolichyl diphosphate synthase 3 (302 aa).

It belongs to the UPP synthase family. Mg(2+) is required as a cofactor.

It functions in the pathway protein modification; protein glycosylation. Catalyzes cis-prenyl chain elongation to produce the polyprenyl backbone of dolichol, a glycosyl carrier-lipid required for the biosynthesis of several classes of glycoprotein. This is Dehydrodolichyl diphosphate synthase 3 from Arabidopsis thaliana (Mouse-ear cress).